Here is a 445-residue protein sequence, read N- to C-terminus: Questin oxidase (445 aa).

This sequence belongs to the questin oxidase family. NADPH is required as a cofactor. As to expression, specifically expressed in conidia.

Its pathway is secondary metabolite biosynthesis. Its function is as follows. Questin oxidase; part of the gene cluster that mediates the biosynthesis of trypacidin, a mycotoxin with antiprotozoal activity and that plays a role in the infection process. The pathway begins with the synthesis of atrochrysone thioester by the polyketide synthase (PKS) tpcC. The atrochrysone carboxyl ACP thioesterase tpcB then breaks the thioester bond and releases the atrochrysone carboxylic acid from tpcC. The decarboxylase tpcK converts atrochrysone carboxylic acid to atrochrysone which is further reduced into emodin anthrone. The next step is performed by the emodin anthrone oxygenase tpcL that catalyzes the oxidation of emodinanthrone to emodin. Emodin O-methyltransferase encoded by tpcA catalyzes methylation of the 8-hydroxy group of emodin to form questin. Ring cleavage of questin by questin oxidase tpcI leads to desmethylsulochrin via several intermediates including questin epoxide. Another methylation step catalyzed by tpcM leads to the formation of sulochrin which is further converted to monomethylsulfochrin by tpcH. Finally, the tpcJ catalyzes the conversion of monomethylsulfochrin to trypacidin. Trypacidin is toxic for human pulmonary and bronchial epithelial cells by initiating the intracellular formation of nitric oxide (NO) and hydrogen peroxide (H(2)O(2)), thus triggering host necrotic cell death. The trypacidin pathway is also able to produce endocrocin via a distinct route from the endocrocin Enc pathway. This is Questin oxidase from Aspergillus fumigatus (strain ATCC MYA-4609 / CBS 101355 / FGSC A1100 / Af293) (Neosartorya fumigata).